An 810-amino-acid chain; its full sequence is RING finger protein unkempt homolog (810 aa).

The interval 1-24 is disordered; that stretch reads MSKGPGPGGSAASSAPPAATAQVL. Over residues 10 to 19 the composition is skewed to low complexity; it reads SAASSAPPAA. 5 consecutive C3H1-type zinc fingers follow at residues 84-113, 124-154, 215-241, 251-285, and 293-321; these read YSPD…HRTT, YYKT…HGPH, NYKT…HNSK, KYRS…HTRT, and IYKS…HVEQ. Residues 239–265 are disordered; it reads NSKDRRRSPRKHKYRSSPCPNVKHGDE. Ser-240 carries the post-translational modification Phosphoserine. The span at 241 to 253 shows a compositional bias: basic residues; that stretch reads KDRRRSPRKHKYR. Residues 324 to 343 form a disordered region; it reads LSDDLQPSSTVSSPTQPGPV. Residues 329 to 343 show a composition bias toward low complexity; sequence QPSSTVSSPTQPGPV. 3 positions are modified to phosphoserine: Ser-374, Ser-378, and Ser-385. Positions 569–585 are enriched in low complexity; sequence SASFHSASPSPPVSLSS. Positions 569–602 are disordered; the sequence is SASFHSASPSPPVSLSSHFLQQPQGHLSQSENTF. Positions 586 to 602 are enriched in polar residues; that stretch reads HFLQQPQGHLSQSENTF. Residue Ser-631 is modified to Phosphoserine. Residues 643–723 adopt a coiled-coil conformation; sequence GAAELARLRQ…QEELERLHSG (81 aa). The segment at 766 to 801 adopts an RING-type; degenerate zinc-finger fold; sequence SVKCLKCQEQNRAVLPCQHAVLCELCAEGSECPVCQ.

This sequence belongs to the unkempt family.

It is found in the cytoplasm. Functionally, sequence-specific RNA-binding protein which plays an important role in the establishment and maintenance of the early morphology of cortical neurons during embryonic development. Acts as a translation repressor and controls a translationally regulated cell morphology program to ensure proper structuring of the nervous system. Translational control depends on recognition of its binding element within target mRNAs which consists of a mandatory UAG trimer upstream of a U/A-rich motif. Associated with polysomes. The sequence is that of RING finger protein unkempt homolog (UNK) from Canis lupus familiaris (Dog).